The primary structure comprises 81 residues: Defensin-like protein 313 (81 aa).

The first 32 residues, 1–32 (MESKRSSSSPLLILITTIMIIFIISGPKSVDA), serve as a signal peptide directing secretion. Disulfide bonds link C34–C63, C45–C74, and C49–C76.

Belongs to the DEFL family.

The protein resides in the secreted. The protein is Defensin-like protein 313 of Arabidopsis thaliana (Mouse-ear cress).